We begin with the raw amino-acid sequence, 347 residues long: MMSLQLGTAGKERQLAEKSRDLQNVSMTEGSEEVSEMDHISDRPDEKDKPSENLQTDSLYKMDTEKWDGLEQESEHSQDPPSKPDEQEVTLVCEGPQVSQLSPSTDESTPIPESLTHKLNYWHAKMGLQMKELGADHGDWLERINNIIQNINNTESTVKSLLTEVISLENQSKNLEDSDQEADIEEKITEIRRQLKEVNIKLTQVDACEEARELKEKLVEQIESFHKEMNVLNSKLEMYYTQGSDADSHNSEDVDTEQEEPLVPEASPSLSASPTPPCSAVWKNALKLFVIVYVVTITGLSCYILFVDATFLFERVLPSVLGHRTMWDLREMMAPFLNLEAEDLLPS.

The disordered stretch occupies residues 1 to 89 (MMSLQLGTAG…PPSKPDEQEV (89 aa)). Composition is skewed to basic and acidic residues over residues 10-21 (GKERQLAEKSRD), 36-51 (EMDH…DKPS), and 60-86 (YKMD…KPDE). A coiled-coil region spans residues 139–238 (DWLERINNII…MNVLNSKLEM (100 aa)). Position 178 is a phosphoserine (Ser-178). The segment at 243-274 (GSDADSHNSEDVDTEQEEPLVPEASPSLSASP) is disordered. Over residues 253 to 262 (DVDTEQEEPL) the composition is skewed to acidic residues. Residues 263 to 273 (VPEASPSLSAS) show a composition bias toward low complexity. The chain crosses the membrane as a helical span at residues 288–308 (LFVIVYVVTITGLSCYILFVD).

It is found in the membrane. This Mus musculus (Mouse) protein is Single-pass membrane and coiled-coil domain-containing protein 2 (Smco2).